Consider the following 840-residue polypeptide: E3 ubiquitin-protein ligase SH3RF1 (840 aa).

An RING-type zinc finger spans residues 12-53 (CPVCLERLDASAKVLPCQHTFCKRCLLGIVGSRNELRCPECR). A disordered region spans residues 105–129 (VTCSPKDGPSSQGGPQPRAQAWSPP). 2 SH3 domains span residues 134–193 (PQLP…IIKP) and 196–259 (QPPP…FNSA). Disordered regions lie at residues 267–324 (DQPP…RHSM), 394–442 (TLNP…PRPS), 516–545 (GPASRGGVLANPPSTGGPAQKPPGNGVAGG), 578–633 (QARS…AASG), 652–723 (AASL…LGAE), and 744–773 (MAPGPQRRASSLDSAPVAPPPRQPCSSLGP). The span at 273-282 (GVAAGEGALA) shows a compositional bias: low complexity. Polar residues predominate over residues 283–292 (TTPSSTTTKQ). Positions 292–362 (QPDGKKNTKK…APSQVHISTT (71 aa)) are interaction with RAC1. Serine 304 is modified (phosphoserine). Composition is skewed to low complexity over residues 307-320 (SLSMASKASQAAQQ) and 405-424 (QAATPTGTAVAAAAGMGPRP). Positions 434–537 (HPRPQPRPSV…PSTGGPAQKP (104 aa)) are interaction with AKT2. The 62-residue stretch at 439–500 (PRPSVYVAIY…PGNYVAPVTR (62 aa)) folds into the SH3 3 domain. Residues 616-625 (SPQPPAPLGP) show a composition bias toward pro residues. Basic and acidic residues predominate over residues 681–692 (RPDKDGKKEKKG). A Phosphoserine modification is found at serine 709. Residues 781–840 (AVCERHRVVVSYPPQSEAELELKEGDIVFVHKKREDGWFKGTLQRNGKTGLFPGSFVENI) enclose the SH3 4 domain.

This sequence belongs to the SH3RF family. In terms of assembly, interacts with RAC1; in a GTP-dependent manner. Interacts with MAP3K10/MLK2 and MAP3K11/MLK3. Interacts with MAPK8IP; this interaction leads to the PJAC complex (POSH-JIP or SH3RF1/MAPK8IP apoptotic complex) with a 1:1 ratio. Interacts with SIAH1. Interacts with HERP1. Probably part of a signaling complex that may contain SH3RF1, MAPK8IP, DLK1, MAP2K4/MKK4, MAP2K7/MKK7, MAPK8/JNK1, MAPK9/JNK2, AKT1 and AKT2. Found in a complex with RAC2, MAP3K7/TAK1, MAP2K7/MKK7, MAPK8IP1/JIP1, MAPK8/JNK1 and MAPK9/JNK2. Found in a complex with RAC1, MAP3K11/MLK3, MAP2K7/MKK7, MAPK8IP1/JIP1 and MAPK8/JNK1. Interacts with SH3RF2. In terms of processing, phosphorylated at Ser-304 by AKT1 and AKT2. When phosphorylated, it has reduced ability to bind Rac. Autoubiquitinated. Ubiquitinated by SH3RF2, leading to proteasome-mediated degradation.

Its subcellular location is the cytoplasm. It localises to the perinuclear region. It is found in the cell projection. The protein localises to the lamellipodium. The protein resides in the golgi apparatus. Its subcellular location is the trans-Golgi network. The catalysed reaction is S-ubiquitinyl-[E2 ubiquitin-conjugating enzyme]-L-cysteine + [acceptor protein]-L-lysine = [E2 ubiquitin-conjugating enzyme]-L-cysteine + N(6)-ubiquitinyl-[acceptor protein]-L-lysine.. Its pathway is protein modification; protein ubiquitination. Functionally, has E3 ubiquitin-protein ligase activity. In the absence of an external substrate, it can catalyze self-ubiquitination. Stimulates ubiquitination of potassium channel KCNJ1, enhancing it's dynamin-dependent and clathrin-independent endocytosis. Acts as a scaffold protein that coordinates with MAPK8IP1/JIP1 in organizing different components of the JNK pathway, including RAC1 or RAC2, MAP3K11/MLK3 or MAP3K7/TAK1, MAP2K7/MKK7, MAPK8/JNK1 and/or MAPK9/JNK2 into a functional multiprotein complex to ensure the effective activation of the JNK signaling pathway. Regulates the differentiation of CD4(+) and CD8(+) T-cells and promotes T-helper 1 (Th1) cell differentiation. Regulates the activation of MAPK8/JNK1 and MAPK9/JNK2 in CD4(+) T-cells and the activation of MAPK8/JNK1 in CD8(+) T-cells. Plays a crucial role in the migration of neocortical neurons in the developing brain. Controls proper cortical neuronal migration and the formation of proximal cytoplasmic dilation in the leading process (PCDLP) in migratory neocortical neurons by regulating the proper localization of activated RAC1 and F-actin assembly. The sequence is that of E3 ubiquitin-protein ligase SH3RF1 (SH3RF1) from Bos taurus (Bovine).